A 74-amino-acid chain; its full sequence is Cytochrome c oxidase assembly factor 5 (74 aa).

The CHCH domain maps to 27 to 65 (QSACVLQEGKSPRQCLKEGNCRALQYSFFECKRSMLDAR). Positions 30 to 41 (CVLQEGKSPRQC) match the Cx10C motif motif. 2 cysteine pairs are disulfide-bonded: C30–C57 and C41–C47. S37 bears the Phosphoserine mark. A Cx9C motif motif is present at residues 47 to 57 (CRALQYSFFEC).

It belongs to the PET191 family.

In terms of biological role, involved in an early step of the mitochondrial complex IV assembly process. In Mus musculus (Mouse), this protein is Cytochrome c oxidase assembly factor 5 (Coa5).